The sequence spans 75 residues: UPF0352 protein YejL (75 aa).

The protein belongs to the UPF0352 family.

In Escherichia coli O127:H6 (strain E2348/69 / EPEC), this protein is UPF0352 protein YejL.